The chain runs to 633 residues: Probable potassium transport system protein Kup 3 (633 aa).

11 consecutive transmembrane segments (helical) span residues 61–81 (LVSL…VLFL), 107–127 (PVLM…DAMI), 143–163 (VAPA…LLLF), 173–193 (VSVF…AAGV), 211–231 (AIGF…AIFL), 255–275 (WFAV…ALVL), 287–307 (LMFP…GTII), 345–365 (IYLP…MLMF), 371–391 (LAPA…ILAF), 402–422 (ALTA…FLGA), and 427–447 (IHHG…MMWT).

This sequence belongs to the HAK/KUP transporter (TC 2.A.72) family.

The protein resides in the cell inner membrane. The catalysed reaction is K(+)(in) + H(+)(in) = K(+)(out) + H(+)(out). Transport of potassium into the cell. Likely operates as a K(+):H(+) symporter. In Sinorhizobium medicae (strain WSM419) (Ensifer medicae), this protein is Probable potassium transport system protein Kup 3.